The sequence spans 196 residues: Potassium-transporting ATPase KdpC subunit (196 aa).

Residues 7 to 27 (PALVLFFVLTLLTGVAYPLAV) form a helical membrane-spanning segment.

Belongs to the KdpC family. In terms of assembly, the system is composed of three essential subunits: KdpA, KdpB and KdpC.

It is found in the cell inner membrane. Functionally, part of the high-affinity ATP-driven potassium transport (or Kdp) system, which catalyzes the hydrolysis of ATP coupled with the electrogenic transport of potassium into the cytoplasm. This subunit acts as a catalytic chaperone that increases the ATP-binding affinity of the ATP-hydrolyzing subunit KdpB by the formation of a transient KdpB/KdpC/ATP ternary complex. The polypeptide is Potassium-transporting ATPase KdpC subunit (Polaromonas naphthalenivorans (strain CJ2)).